The following is a 128-amino-acid chain: Aspartate 1-decarboxylase (128 aa).

Serine 25 serves as the catalytic Schiff-base intermediate with substrate; via pyruvic acid. Serine 25 carries the pyruvic acid (Ser) modification. Threonine 57 contacts substrate. Residue tyrosine 58 is the Proton donor of the active site. 73-75 (GAA) contributes to the substrate binding site.

Belongs to the PanD family. Heterooctamer of four alpha and four beta subunits. The cofactor is pyruvate. In terms of processing, is synthesized initially as an inactive proenzyme, which is activated by self-cleavage at a specific serine bond to produce a beta-subunit with a hydroxyl group at its C-terminus and an alpha-subunit with a pyruvoyl group at its N-terminus.

The protein localises to the cytoplasm. The catalysed reaction is L-aspartate + H(+) = beta-alanine + CO2. The protein operates within cofactor biosynthesis; (R)-pantothenate biosynthesis; beta-alanine from L-aspartate: step 1/1. Catalyzes the pyruvoyl-dependent decarboxylation of aspartate to produce beta-alanine. The polypeptide is Aspartate 1-decarboxylase (Chlorobium phaeovibrioides (strain DSM 265 / 1930) (Prosthecochloris vibrioformis (strain DSM 265))).